The following is a 154-amino-acid chain: MGLSEAEWQLVLHVWAKVEADLSGHGQEILIRLFKGHPETLEKFDKFKHLKSEAEMKASEDLKKHGHTVLTALGGILKKKGHHEAELKPLAQSHATKHKIPIKYLEFISDAIIHVLHSRHPSDFGADAQAAMTKALELFRKDIAAKYKELGFHG.

Residues 2–148 form the Globin domain; the sequence is GLSEAEWQLV…FRKDIAAKYK (147 aa). S4 bears the Phosphoserine mark. H65 provides a ligand contact to nitrite. An O2-binding site is contributed by H65. The residue at position 68 (T68) is a Phosphothreonine. H94 contributes to the heme b binding site.

Belongs to the globin family. Monomeric.

The protein localises to the cytoplasm. Its subcellular location is the sarcoplasm. The enzyme catalyses Fe(III)-heme b-[protein] + nitric oxide + H2O = Fe(II)-heme b-[protein] + nitrite + 2 H(+). It carries out the reaction H2O2 + AH2 = A + 2 H2O. Its function is as follows. Monomeric heme protein which primary function is to store oxygen and facilitate its diffusion within muscle tissues. Reversibly binds oxygen through a pentacoordinated heme iron and enables its timely and efficient release as needed during periods of heightened demand. Depending on the oxidative conditions of tissues and cells, and in addition to its ability to bind oxygen, it also has a nitrite reductase activity whereby it regulates the production of bioactive nitric oxide. Under stress conditions, like hypoxia and anoxia, it also protects cells against reactive oxygen species thanks to its pseudoperoxidase activity. In Ziphius cavirostris (Cuvier's beaked whale), this protein is Myoglobin (MB).